Reading from the N-terminus, the 341-residue chain is MLVLGLETSCDETGVALYDSERGLLADALFSQIDLHRVYGGVVPELASRDHVKRMLPLIRQVLQEAGCVATEIDAIAYTAGPGLVGALLVGASCAQALAFAWDIPAIGVHHMEGHLLAPMLEEQPPEFPFVALLVSGGHTQLVRVDGIGQYELLGESLDDAAGEAFDKTAKLIGLNYPGGPEIARLAEQGTPGRFVFPRPMTDRPGLQFSFSGLKTFALNTWQQCRDAGDDNEQTRCDVSLAFQQAVVETLTIKCKRALKQTGLKRLVIAGGVSANKALRASLEDMLASIKGNVYYARPRFCTDNGAMIAYAGCQRLLAGQQQDLAISVQARWPMEQLPPV.

Fe cation is bound by residues His111 and His115. Substrate-binding positions include 134-138 (LVSGG), Asp167, Gly180, and Asn276. Position 304 (Asp304) interacts with Fe cation.

This sequence belongs to the KAE1 / TsaD family. It depends on Fe(2+) as a cofactor.

Its subcellular location is the cytoplasm. The catalysed reaction is L-threonylcarbamoyladenylate + adenosine(37) in tRNA = N(6)-L-threonylcarbamoyladenosine(37) in tRNA + AMP + H(+). Required for the formation of a threonylcarbamoyl group on adenosine at position 37 (t(6)A37) in tRNAs that read codons beginning with adenine. Is involved in the transfer of the threonylcarbamoyl moiety of threonylcarbamoyl-AMP (TC-AMP) to the N6 group of A37, together with TsaE and TsaB. TsaD likely plays a direct catalytic role in this reaction. The sequence is that of tRNA N6-adenosine threonylcarbamoyltransferase from Pseudomonas entomophila (strain L48).